The following is a 268-amino-acid chain: Hydroxyethylthiazole kinase (268 aa).

M47 is a binding site for substrate. Residues K123 and T170 each coordinate ATP. A196 lines the substrate pocket.

Belongs to the Thz kinase family. Requires Mg(2+) as cofactor.

The catalysed reaction is 5-(2-hydroxyethyl)-4-methylthiazole + ATP = 4-methyl-5-(2-phosphooxyethyl)-thiazole + ADP + H(+). It participates in cofactor biosynthesis; thiamine diphosphate biosynthesis; 4-methyl-5-(2-phosphoethyl)-thiazole from 5-(2-hydroxyethyl)-4-methylthiazole: step 1/1. Catalyzes the phosphorylation of the hydroxyl group of 4-methyl-5-beta-hydroxyethylthiazole (THZ). The polypeptide is Hydroxyethylthiazole kinase (Finegoldia magna (strain ATCC 29328 / DSM 20472 / WAL 2508) (Peptostreptococcus magnus)).